The following is a 148-amino-acid chain: Endoribonuclease YbeY (148 aa).

His113, His117, and His123 together coordinate Zn(2+).

Belongs to the endoribonuclease YbeY family. Requires Zn(2+) as cofactor.

It localises to the cytoplasm. Single strand-specific metallo-endoribonuclease involved in late-stage 70S ribosome quality control and in maturation of the 3' terminus of the 16S rRNA. The polypeptide is Endoribonuclease YbeY (Borrelia duttonii (strain Ly)).